An 881-amino-acid chain; its full sequence is Alanine--tRNA ligase (881 aa).

Residues His-566, His-570, Cys-668, and His-672 each coordinate Zn(2+).

This sequence belongs to the class-II aminoacyl-tRNA synthetase family. Zn(2+) is required as a cofactor.

It localises to the cytoplasm. The enzyme catalyses tRNA(Ala) + L-alanine + ATP = L-alanyl-tRNA(Ala) + AMP + diphosphate. Functionally, catalyzes the attachment of alanine to tRNA(Ala) in a two-step reaction: alanine is first activated by ATP to form Ala-AMP and then transferred to the acceptor end of tRNA(Ala). Also edits incorrectly charged Ser-tRNA(Ala) and Gly-tRNA(Ala) via its editing domain. This chain is Alanine--tRNA ligase, found in Frankia alni (strain DSM 45986 / CECT 9034 / ACN14a).